A 544-amino-acid chain; its full sequence is Chaperonin GroEL (544 aa).

ATP is bound by residues 30–33 (TLGP), Lys51, 87–91 (DGTTT), Gly415, and Asp495.

This sequence belongs to the chaperonin (HSP60) family. In terms of assembly, forms a cylinder of 14 subunits composed of two heptameric rings stacked back-to-back. Interacts with the co-chaperonin GroES.

Its subcellular location is the cytoplasm. The enzyme catalyses ATP + H2O + a folded polypeptide = ADP + phosphate + an unfolded polypeptide.. Functionally, together with its co-chaperonin GroES, plays an essential role in assisting protein folding. The GroEL-GroES system forms a nano-cage that allows encapsulation of the non-native substrate proteins and provides a physical environment optimized to promote and accelerate protein folding. In Aeromonas salmonicida (strain A449), this protein is Chaperonin GroEL.